Reading from the N-terminus, the 203-residue chain is Ribonuclease T (203 aa).

Positions 11-185 (VVVDVETGGF…YDTEKTAELF (175 aa)) constitute an Exonuclease domain. Positions 14, 16, 172, and 177 each coordinate Mg(2+). Catalysis depends on His172, which acts as the Proton donor/acceptor.

It belongs to the RNase T family. Homodimer. It depends on Mg(2+) as a cofactor.

Its function is as follows. Trims short 3' overhangs of a variety of RNA species, leaving a one or two nucleotide 3' overhang. Responsible for the end-turnover of tRNA: specifically removes the terminal AMP residue from uncharged tRNA (tRNA-C-C-A). Also appears to be involved in tRNA biosynthesis. The protein is Ribonuclease T of Pseudomonas putida (strain ATCC 47054 / DSM 6125 / CFBP 8728 / NCIMB 11950 / KT2440).